The following is a 717-amino-acid chain: Pentatricopeptide repeat-containing protein At1g53600, mitochondrial (717 aa).

The transit peptide at 1-47 (MVMRPISNKGLIYRHNICLRCNSTLAVSNHEPITQKTRNFLETTTTS) directs the protein to the mitochondrion. 17 PPR repeats span residues 49–79 (AIFQ…MSNR), 80–110 (SIVS…MPVR), 111–142 (VTTS…IPEK), 143–173 (NAVS…TPVK), 176–206 (DSVA…MAVK), 207–241 (EVVS…NVIT), 242–272 (WTAM…GDVK), 274–308 (NSNT…PLEF), 309–339 (DLFL…MKNK), 340–374 (DSVS…DMVS), 375–401 (WTDM…MPEK), 402–436 (DNIT…EVCP), 437–471 (NSYT…NIVN), 472–502 (DLSV…ISEP), 503–537 (NIVS…GKEP), 538–568 (NGVT…MKSS), and 574–604 (GPDH…MPCK). Residues 609–684 (VWGSLLSASK…DPGSSWIILK (76 aa)) form a type E motif region. The tract at residues 685–715 (GEVHNFLAGDESQLNLEEIGFTLKMIRKEME) is type E(+) motif.

Belongs to the PPR family. PCMP-E subfamily.

Its subcellular location is the mitochondrion. The sequence is that of Pentatricopeptide repeat-containing protein At1g53600, mitochondrial (PCMP-E63) from Arabidopsis thaliana (Mouse-ear cress).